Reading from the N-terminus, the 190-residue chain is Ribosome maturation factor RimM (190 aa).

The PRC barrel domain maps to 114–190 (DDEYYWVDLI…CITVDWQPDY (77 aa)).

Belongs to the RimM family. As to quaternary structure, binds ribosomal protein uS19.

The protein resides in the cytoplasm. Its function is as follows. An accessory protein needed during the final step in the assembly of 30S ribosomal subunit, possibly for assembly of the head region. Essential for efficient processing of 16S rRNA. May be needed both before and after RbfA during the maturation of 16S rRNA. It has affinity for free ribosomal 30S subunits but not for 70S ribosomes. The protein is Ribosome maturation factor RimM of Acidovorax sp. (strain JS42).